A 151-amino-acid chain; its full sequence is Large ribosomal subunit protein bL9 (151 aa).

It belongs to the bacterial ribosomal protein bL9 family.

Its function is as follows. Binds to the 23S rRNA. The protein is Large ribosomal subunit protein bL9 of Lactobacillus acidophilus (strain ATCC 700396 / NCK56 / N2 / NCFM).